A 60-amino-acid polypeptide reads, in one-letter code: Large ribosomal subunit protein bL32 (60 aa).

The protein belongs to the bacterial ribosomal protein bL32 family.

In Ruminiclostridium cellulolyticum (strain ATCC 35319 / DSM 5812 / JCM 6584 / H10) (Clostridium cellulolyticum), this protein is Large ribosomal subunit protein bL32.